A 133-amino-acid polypeptide reads, in one-letter code: DNA-directed RNA polymerase subunit omega (133 aa).

This sequence belongs to the RNA polymerase subunit omega family. In terms of assembly, the RNAP catalytic core consists of 2 alpha, 1 beta, 1 beta' and 1 omega subunit. When a sigma factor is associated with the core the holoenzyme is formed, which can initiate transcription.

It carries out the reaction RNA(n) + a ribonucleoside 5'-triphosphate = RNA(n+1) + diphosphate. Promotes RNA polymerase assembly. Latches the N- and C-terminal regions of the beta' subunit thereby facilitating its interaction with the beta and alpha subunits. This is DNA-directed RNA polymerase subunit omega from Brucella abortus (strain S19).